A 256-amino-acid chain; its full sequence is MLRIADKTFDSHLFTGTGKFASSQLMVEAIRASGSQLVTLAMKRVDLRQHNDAILEPLIAAGVTLLPNTSGAKTAEEAIFAAHLAREALGTNWLKLEIHPDARWLLPDPIETLKAAEMLVQQGFVVLPYCGADPVLCKRLEEVGCAAVMPLGAPIGSNQGLETRAMLEIIIQQATVPVVVDAGIGVPSHAAQALEMGADAVLVNTAIAVADDPVNMAKAFRLAVEAGLLARQSGPGSRSHFAHATSPLTGFLEASA.

Lysine 95 serves as the catalytic Schiff-base intermediate with DXP. 1-deoxy-D-xylulose 5-phosphate is bound by residues glycine 156, 182–183, and 204–205; these read AG and NT.

Belongs to the ThiG family. In terms of assembly, homotetramer. Forms heterodimers with either ThiH or ThiS.

The protein resides in the cytoplasm. The enzyme catalyses [ThiS sulfur-carrier protein]-C-terminal-Gly-aminoethanethioate + 2-iminoacetate + 1-deoxy-D-xylulose 5-phosphate = [ThiS sulfur-carrier protein]-C-terminal Gly-Gly + 2-[(2R,5Z)-2-carboxy-4-methylthiazol-5(2H)-ylidene]ethyl phosphate + 2 H2O + H(+). The protein operates within cofactor biosynthesis; thiamine diphosphate biosynthesis. Its function is as follows. Catalyzes the rearrangement of 1-deoxy-D-xylulose 5-phosphate (DXP) to produce the thiazole phosphate moiety of thiamine. Sulfur is provided by the thiocarboxylate moiety of the carrier protein ThiS. In vitro, sulfur can be provided by H(2)S. In Shigella boydii serotype 18 (strain CDC 3083-94 / BS512), this protein is Thiazole synthase.